A 303-amino-acid polypeptide reads, in one-letter code: Glycine--tRNA ligase alpha subunit (303 aa).

This sequence belongs to the class-II aminoacyl-tRNA synthetase family. In terms of assembly, tetramer of two alpha and two beta subunits.

It localises to the cytoplasm. It carries out the reaction tRNA(Gly) + glycine + ATP = glycyl-tRNA(Gly) + AMP + diphosphate. This is Glycine--tRNA ligase alpha subunit from Enterobacter sp. (strain 638).